A 277-amino-acid chain; its full sequence is Hemin import ATP-binding protein HmuV (277 aa).

In terms of domain architecture, ABC transporter spans 19-259 (VEVADLNYSV…AIIEEAFGHR (241 aa)). ATP is bound at residue 51 to 58 (GRNGAGKS).

It belongs to the ABC transporter superfamily. Heme (hemin) importer (TC 3.A.1.14.5) family. In terms of assembly, the complex is composed of two ATP-binding proteins (HmuV), two transmembrane proteins (HmuU) and a solute-binding protein (HmuT).

The protein resides in the cell membrane. In terms of biological role, part of the ABC transporter complex HmuTUV involved in hemin import. Responsible for energy coupling to the transport system. This Deinococcus geothermalis (strain DSM 11300 / CIP 105573 / AG-3a) protein is Hemin import ATP-binding protein HmuV.